The primary structure comprises 155 residues: U4/U6.U5 small nuclear ribonucleoprotein 27 kDa protein (155 aa).

Basic residues-rich tracts occupy residues 1 to 31 and 39 to 59; these read MGRS…RERS and RRSR…RHRS. Residues 1–97 form a disordered region; the sequence is MGRSRSRSPR…ITEEDLEGKT (97 aa). 2 positions are modified to phosphoserine: S61 and S65. Positions 66 to 97 are enriched in basic and acidic residues; sequence RLKERRDEEKKETKETKSKERQITEEDLEGKT. Residues S111, S114, and S132 each carry the phosphoserine modification.

Belongs to the SNUT3 family. Part of a tri-snRNP complex. In terms of processing, phosphorylated in vitro by snRNP-associated protein kinase.

The protein resides in the nucleus. Its function is as follows. May play a role in mRNA splicing. The polypeptide is U4/U6.U5 small nuclear ribonucleoprotein 27 kDa protein (SNRNP27) (Homo sapiens (Human)).